The primary structure comprises 226 residues: 7-cyano-7-deazaguanine synthase (226 aa).

ATP is bound at residue 8–18 (ISGGLDSTTCL). Residues Cys188, Cys198, Cys201, and Cys204 each coordinate Zn(2+).

The protein belongs to the QueC family. Zn(2+) serves as cofactor.

The catalysed reaction is 7-carboxy-7-deazaguanine + NH4(+) + ATP = 7-cyano-7-deazaguanine + ADP + phosphate + H2O + H(+). It participates in purine metabolism; 7-cyano-7-deazaguanine biosynthesis. In terms of biological role, catalyzes the ATP-dependent conversion of 7-carboxy-7-deazaguanine (CDG) to 7-cyano-7-deazaguanine (preQ(0)). The chain is 7-cyano-7-deazaguanine synthase from Coxiella burnetii (strain RSA 331 / Henzerling II).